The primary structure comprises 487 residues: Homoserine O-acetyltransferase (487 aa).

Residues N45 to E352 form the AB hydrolase-1 domain. The Nucleophile role is filled by S150. Substrate is bound at residue R219. Residues D313 and H346 contribute to the active site. Residue D347 coordinates substrate. 2 CBS domains span residues M373–L430 and M434–Q487.

Belongs to the AB hydrolase superfamily. MetX family. As to quaternary structure, homodimer.

The protein localises to the cytoplasm. It carries out the reaction L-homoserine + acetyl-CoA = O-acetyl-L-homoserine + CoA. Its pathway is amino-acid biosynthesis; L-methionine biosynthesis via de novo pathway; O-acetyl-L-homoserine from L-homoserine: step 1/1. Functionally, transfers an acetyl group from acetyl-CoA to L-homoserine, forming acetyl-L-homoserine. In Methanocorpusculum labreanum (strain ATCC 43576 / DSM 4855 / Z), this protein is Homoserine O-acetyltransferase.